The sequence spans 250 residues: MRTPLVVGNWKMNGSRAANRALLESMRKEMEAGVTAEVAVCPPFVYLADMESLLQGSVINWGAQNLSHHEVGAYTGEIAPSMLADLGCRFVIVGHSERRTLYGETDSLVAEKAIVAQKVNIIPIICVGETLQEREQNITEQVVKRQLNAVLELAGVNALEKAVIAYEPIWAIGTGRTATPEQAQEVHALIRSHVAIQNSGIAEELLILYGGSVKGNNAAELLAMPDIDGGLIGGASLDAKEFLTICQAAG.

9 to 11 is a binding site for substrate; it reads NWK. His95 acts as the Electrophile in catalysis. Catalysis depends on Glu167, which acts as the Proton acceptor. Residues Gly173, Ser212, and 233-234 contribute to the substrate site; that span reads GG.

It belongs to the triosephosphate isomerase family. In terms of assembly, homodimer.

It localises to the cytoplasm. The enzyme catalyses D-glyceraldehyde 3-phosphate = dihydroxyacetone phosphate. It participates in carbohydrate biosynthesis; gluconeogenesis. Its pathway is carbohydrate degradation; glycolysis; D-glyceraldehyde 3-phosphate from glycerone phosphate: step 1/1. Functionally, involved in the gluconeogenesis. Catalyzes stereospecifically the conversion of dihydroxyacetone phosphate (DHAP) to D-glyceraldehyde-3-phosphate (G3P). In Nitrosococcus oceani (strain ATCC 19707 / BCRC 17464 / JCM 30415 / NCIMB 11848 / C-107), this protein is Triosephosphate isomerase.